Consider the following 187-residue polypeptide: Chlorobenzene dioxygenase subunit beta (187 aa).

The protein belongs to the bacterial ring-hydroxylating dioxygenase beta subunit family. As to quaternary structure, this dioxygenase system consists of four proteins: the two subunits of the oxygenase component (TecA1 and TecA2), a ferredoxin (TecA3) and a ferredoxin reductase (TecA4).

It carries out the reaction chlorobenzene + NADH + O2 + H(+) = (1R,2R)-3-chlorocyclohexa-3,5-diene-1,2-diol + NAD(+). Its pathway is aromatic compound metabolism. Functionally, part of the oxygenase component of the chlorobenzene dioxygenase system that catalyzes the dihydroxylation of a range of aromatic compounds, including chlorinated benzenes and toluenes, and dinuclear aromatics such as biphenyl and dibenzo-p-dioxin. The beta subunit is not directly involved in the control of substrate specificity. The chain is Chlorobenzene dioxygenase subunit beta from Cupriavidus sp. (strain PS12).